Reading from the N-terminus, the 360-residue chain is Peptide chain release factor 1 (360 aa).

Residue Q235 is modified to N5-methylglutamine. Over residues 283 to 293 the composition is skewed to basic and acidic residues; the sequence is EREAQAKEASA. The segment at 283–305 is disordered; it reads EREAQAKEASARKSLIGSGDRSD.

Belongs to the prokaryotic/mitochondrial release factor family. Methylated by PrmC. Methylation increases the termination efficiency of RF1.

The protein resides in the cytoplasm. Functionally, peptide chain release factor 1 directs the termination of translation in response to the peptide chain termination codons UAG and UAA. The polypeptide is Peptide chain release factor 1 (Ralstonia pickettii (strain 12J)).